Reading from the N-terminus, the 836-residue chain is Protein AKNAD1 (836 aa).

3 stretches are compositionally biased toward polar residues: residues 159-172 (SWPK…TDQL), 181-192 (SNKPGSATTTEE), and 227-248 (SYQG…NTFK). 2 disordered regions span residues 159–248 (SWPK…NTFK) and 303–325 (LETT…KITE). A compositionally biased stretch (basic and acidic residues) spans 311–323 (CVEKQHQEQKGKI). A coiled-coil region spans residues 372-484 (QKISQGKQMC…DVKEKMDESK (113 aa)). Disordered regions lie at residues 510-545 (SNEI…EAPN) and 575-596 (MRLS…DCAE).

The protein belongs to the AKNA family.

This Homo sapiens (Human) protein is Protein AKNAD1 (AKNAD1).